The sequence spans 77 residues: MARVTVEDCLIHENSRFRLVLAASKRARQLTLGHQPLVAPENDKPTVLALREIEEGKVTVQGLLDGQDVSEHLARQA.

The protein belongs to the RNA polymerase subunit omega family. In terms of assembly, the RNAP catalytic core consists of 2 alpha, 1 beta, 1 beta' and 1 omega subunit. When a sigma factor is associated with the core the holoenzyme is formed, which can initiate transcription.

The catalysed reaction is RNA(n) + a ribonucleoside 5'-triphosphate = RNA(n+1) + diphosphate. Its function is as follows. Promotes RNA polymerase assembly. Latches the N- and C-terminal regions of the beta' subunit thereby facilitating its interaction with the beta and alpha subunits. The polypeptide is DNA-directed RNA polymerase subunit omega (Dichelobacter nodosus (strain VCS1703A)).